The primary structure comprises 674 residues: Dymeclin (674 aa).

The N-myristoyl glycine moiety is linked to residue glycine 2.

This sequence belongs to the dymeclin family. Interacts with GOLM1 and PPIB. Myristoylated in vitro; myristoylation is not essential for protein targeting to Golgi compartment.

Its subcellular location is the cytoplasm. The protein resides in the golgi apparatus. The protein localises to the membrane. In terms of biological role, necessary for correct organization of Golgi apparatus. Involved in bone development. The polypeptide is Dymeclin (Dym) (Rattus norvegicus (Rat)).